Here is a 425-residue protein sequence, read N- to C-terminus: CBS domain-containing protein CBSX6 (425 aa).

The CBS 1 domain occupies 16-90; sequence GKPEMVEFYE…FLAKTECLQE (75 aa). The segment covering 159 to 172 has biased composition (low complexity); that stretch reads SENSSSSSGLSADS. The disordered stretch occupies residues 159 to 182; the sequence is SENSSSSSGLSADSTNRPTTSMTS. Over residues 173–182 the composition is skewed to polar residues; the sequence is TNRPTTSMTS. 2 consecutive transmembrane segments (helical) span residues 200-220 and 275-295; these read IGVLGALAPLPLTSISTLGII and YLAAAWALANLYAGQFVMGVE. Positions 347-409 constitute a CBS 2 domain; the sequence is MYRGRSAPLT…TAVTKQPSAF (63 aa).

Its subcellular location is the vacuole membrane. The polypeptide is CBS domain-containing protein CBSX6 (CBSX6) (Arabidopsis thaliana (Mouse-ear cress)).